A 154-amino-acid polypeptide reads, in one-letter code: Nuclear cap-binding protein subunit 2 (154 aa).

Residues Tyr-10, Tyr-33, 102–106 (RVDWD), 113–117 (RQYGR), and 123–124 (QV) each bind mRNA. One can recognise an RRM domain in the interval 30–108 (CTLYVGNLSF…RLIRVDWDAG (79 aa)).

It belongs to the RRM NCBP2 family. Component of the nuclear cap-binding complex (CBC), a heterodimer composed of Cbp80 and Cbp20 that interacts with m7GpppG-capped RNA. Interacts with Ars2.

It is found in the nucleus. Its function is as follows. Component of the cap-binding complex (CBC), which binds co-transcriptionally to the 5' cap of pre-mRNAs and is involved in various processes such as pre-mRNA splicing and RNA-mediated gene silencing (RNAi). The CBC complex is involved in miRNA-mediated RNA interference via its interaction with Ars2 and is required for primary microRNAs (miRNAs) processing. Also involved in innate immunity via the short interfering RNAs (siRNAs) processing machinery by restricting the viral RNA production. In the CBC complex, Cbp20 recognizes and binds capped RNAs (m7GpppG-capped RNA) but requires Cbp80 to stabilize the movement of its N-terminal loop and lock the CBC into a high affinity cap-binding state with the cap structure. The protein is Nuclear cap-binding protein subunit 2 (Cbp20) of Drosophila yakuba (Fruit fly).